The following is a 208-amino-acid chain: NAD(P)H-quinone oxidoreductase subunit I (208 aa).

4Fe-4S ferredoxin-type domains lie at 55 to 84 (GRIHYEFDKCIACEVCVRVCPINLPVVDWV) and 95 to 124 (RNYSIDFGVCIFCGNCVEYCPTNCLSMTEE). Residues cysteine 64, cysteine 67, cysteine 70, cysteine 74, cysteine 104, cysteine 107, cysteine 110, and cysteine 114 each contribute to the [4Fe-4S] cluster site.

Belongs to the complex I 23 kDa subunit family. In terms of assembly, NDH-1 is composed of at least 11 different subunits. Requires [4Fe-4S] cluster as cofactor.

The protein resides in the cellular thylakoid membrane. It catalyses the reaction a plastoquinone + NADH + (n+1) H(+)(in) = a plastoquinol + NAD(+) + n H(+)(out). The catalysed reaction is a plastoquinone + NADPH + (n+1) H(+)(in) = a plastoquinol + NADP(+) + n H(+)(out). In terms of biological role, NDH-1 shuttles electrons from an unknown electron donor, via FMN and iron-sulfur (Fe-S) centers, to quinones in the respiratory and/or the photosynthetic chain. The immediate electron acceptor for the enzyme in this species is believed to be plastoquinone. Couples the redox reaction to proton translocation, and thus conserves the redox energy in a proton gradient. This chain is NAD(P)H-quinone oxidoreductase subunit I, found in Prochlorococcus marinus (strain MIT 9515).